Reading from the N-terminus, the 162-residue chain is uncharacterized protein (162 aa).

It belongs to the A.longa ORF167/ORF288 family.

The protein localises to the plastid. This is an uncharacterized protein from Euglena longa (Euglenophycean alga).